We begin with the raw amino-acid sequence, 170 residues long: MASLFSTLQRSLKGLLILVPVLIGLVLASPAEAVRWDAETLTVPGNPEGTQVTFSEQEINTGRKVFNTSCGTCHAGGITKTNQNVGLDPETLALATPARDNVDALVDYMKDPTSYDGEYSIADLHPSMRDAELYPAMRDLTDEELRLMAGYILVAPKVQGTAWGGGKIYF.

The signal sequence occupies residues 1–33 (MASLFSTLQRSLKGLLILVPVLIGLVLASPAEA). Residues cysteine 70, cysteine 73, histidine 74, and methionine 137 each coordinate heme c.

This sequence belongs to the cytochrome c family. PsbV subfamily. PSII is composed of 1 copy each of membrane proteins PsbA, PsbB, PsbC, PsbD, PsbE, PsbF, PsbH, PsbI, PsbJ, PsbK, PsbL, PsbM, PsbT, PsbX, PsbY, PsbZ, Psb30/Ycf12, peripheral proteins PsbO, CyanoQ (PsbQ), PsbU, PsbV and a large number of cofactors. It forms dimeric complexes. Heme c serves as cofactor.

It is found in the cellular thylakoid membrane. One of the extrinsic, lumenal subunits of photosystem II (PSII). PSII is a light-driven water plastoquinone oxidoreductase, using light energy to abstract electrons from H(2)O, generating a proton gradient subsequently used for ATP formation. The extrinsic proteins stabilize the structure of photosystem II oxygen-evolving complex (OEC), the ion environment of oxygen evolution and protect the OEC against heat-induced inactivation. Low-potential cytochrome c that plays a role in the OEC of PSII. In Parasynechococcus marenigrum (strain WH8102), this protein is Photosystem II extrinsic protein V.